The primary structure comprises 215 residues: Adenylate kinase (215 aa).

10–15 (GAGKGT) contacts ATP. The segment at 30–59 (STGDIFRKNISENTPLGMEARSYMDKGLLV) is NMP. Residues T31, R36, 57–59 (LLV), 85–88 (GFPR), and Q92 contribute to the AMP site. The LID stretch occupies residues 126–163 (GRRVCTSCGGSFHIKFNPPTIDGKCNLCGSDIVQRKDD). R127 is a binding site for ATP. Positions 130 and 133 each coordinate Zn(2+). 136–137 (SF) is an ATP binding site. Positions 150 and 153 each coordinate Zn(2+). The AMP site is built by R160 and R171. K199 lines the ATP pocket.

It belongs to the adenylate kinase family. Monomer.

It localises to the cytoplasm. It catalyses the reaction AMP + ATP = 2 ADP. It functions in the pathway purine metabolism; AMP biosynthesis via salvage pathway; AMP from ADP: step 1/1. Catalyzes the reversible transfer of the terminal phosphate group between ATP and AMP. Plays an important role in cellular energy homeostasis and in adenine nucleotide metabolism. This chain is Adenylate kinase, found in Clostridium botulinum (strain Eklund 17B / Type B).